The chain runs to 527 residues: NADH-ubiquinone oxidoreductase chain 5 (527 aa).

The next 14 helical transmembrane spans lie at 3–23, 43–63, 75–95, 98–118, 141–161, 168–188, 197–217, 226–246, 263–283, 318–338, 357–377, 398–418, 432–452, and 507–527; these read ISIF…WLMP, FYFN…SVLV, FNYY…LNFS, IFTM…LVLF, FMFV…SFSM, LLLL…SWLP, VSSL…LMNF, FISF…LASL, MGFS…IHLV, LPNF…GLIF, YMMF…GYSF, VFMN…LWWM, VDFF…FLIL, and YLKS…FMIC.

The protein belongs to the complex I subunit 5 family.

It is found in the mitochondrion inner membrane. The enzyme catalyses a ubiquinone + NADH + 5 H(+)(in) = a ubiquinol + NAD(+) + 4 H(+)(out). Core subunit of the mitochondrial membrane respiratory chain NADH dehydrogenase (Complex I) that is believed to belong to the minimal assembly required for catalysis. Complex I functions in the transfer of electrons from NADH to the respiratory chain. The immediate electron acceptor for the enzyme is believed to be ubiquinone. The polypeptide is NADH-ubiquinone oxidoreductase chain 5 (Caenorhabditis elegans).